Here is an 868-residue protein sequence, read N- to C-terminus: Protein NIP100 (868 aa).

The region spanning 34–84 is the CAP-Gly domain; the sequence is GETQFAKGIWYGIELDKPLGKNDGSANGIRYFDIDLKKANSNGGYYGLFCK. Coiled-coil stretches lie at residues 101 to 175, 207 to 375, and 645 to 776; these read LNGN…HLDN, LDQT…QEEL, and SLLS…QIKE.

As to quaternary structure, component of the dynactin complex composed of at least ARP1, JNM1, NIP100 and ARP10. Dynactin comprises a short rod of the ARP1 filament attached to ARP10 at its pointed-end and probably associated with the capping protein at its barbed-end. The rod is implicated in dynein cargo binding. A sidearm formed by NIP100 projects from the ARP1 filament and is implicated in motor binding.

It localises to the cytoplasm. The protein resides in the cytoskeleton. It is found in the spindle pole. Functionally, motor-binding component of the dynactin complex which assists cytoplasmic dynein by increasing its processivity and by regulation of its cargo binding. The dynactin complex is required for the spindle translocation late in anaphase and is involved in a cell wall synthesis checkpoint. In Saccharomyces cerevisiae (strain ATCC 204508 / S288c) (Baker's yeast), this protein is Protein NIP100 (NIP100).